The chain runs to 33 residues: Brevinin-2E (33 aa).

A disulfide bridge connects residues Cys27 and Cys33.

Belongs to the frog skin active peptide (FSAP) family. Brevinin subfamily. Expressed by the skin glands.

It localises to the secreted. Functionally, shows antibacterial activity against representative Gram-negative and Gram-positive bacterial species, and hemolytic activity. The polypeptide is Brevinin-2E (Pelophylax lessonae (Pool frog)).